The primary structure comprises 361 residues: Hydroxycarboxylate dehydrogenase B (361 aa).

Residues His48, 122–124 (GRI), 178–182 (LLDYA), His234, Asn270, and 313–316 (GEWE) contribute to the NAD(+) site.

Belongs to the LDH2/MDH2 oxidoreductase family.

It carries out the reaction 2-hydroxyglutarate + NADP(+) = 2-oxoglutarate + NADPH + H(+). The enzyme catalyses 2-hydroxyglutarate + NAD(+) = 2-oxoglutarate + NADH + H(+). It catalyses the reaction 3-phenyllactate + NADP(+) = 3-phenylpyruvate + NADPH + H(+). The catalysed reaction is 3-phenyllactate + NAD(+) = 3-phenylpyruvate + NADH + H(+). It carries out the reaction (2R)-2-hydroxy-3-(4-hydroxyphenyl)propanoate + NAD(+) = 3-(4-hydroxyphenyl)pyruvate + NADH + H(+). The enzyme catalyses (2R)-2-hydroxy-3-(4-hydroxyphenyl)propanoate + NADP(+) = 3-(4-hydroxyphenyl)pyruvate + NADPH + H(+). It catalyses the reaction (2R)-3-(3,4-dihydroxyphenyl)lactate + NADP(+) = 3-(3,4-dihydroxyphenyl)pyruvate + NADPH + H(+). The catalysed reaction is (2R)-3-(3,4-dihydroxyphenyl)lactate + NAD(+) = 3-(3,4-dihydroxyphenyl)pyruvate + NADH + H(+). Functionally, catalyzes the NAD(P)H-dependent reduction of 2-oxoglutarate, phenylpyruvate and (4-hydroxyphenyl)pyruvate, leading to the respective 2-hydroxycarboxylate in vitro. Shows a preference for NADPH over NADH as a redox partner. Do not catalyze the reverse reactions. This chain is Hydroxycarboxylate dehydrogenase B, found in Escherichia coli O157:H7.